Here is a 516-residue protein sequence, read N- to C-terminus: Bifunctional purine biosynthesis protein PurH (516 aa).

An MGS-like domain is found at 1–146 (MAPFALLSVS…KNHADVAVLT (146 aa)).

It belongs to the PurH family.

The catalysed reaction is (6R)-10-formyltetrahydrofolate + 5-amino-1-(5-phospho-beta-D-ribosyl)imidazole-4-carboxamide = 5-formamido-1-(5-phospho-D-ribosyl)imidazole-4-carboxamide + (6S)-5,6,7,8-tetrahydrofolate. It catalyses the reaction IMP + H2O = 5-formamido-1-(5-phospho-D-ribosyl)imidazole-4-carboxamide. It functions in the pathway purine metabolism; IMP biosynthesis via de novo pathway; 5-formamido-1-(5-phospho-D-ribosyl)imidazole-4-carboxamide from 5-amino-1-(5-phospho-D-ribosyl)imidazole-4-carboxamide (10-formyl THF route): step 1/1. Its pathway is purine metabolism; IMP biosynthesis via de novo pathway; IMP from 5-formamido-1-(5-phospho-D-ribosyl)imidazole-4-carboxamide: step 1/1. The protein is Bifunctional purine biosynthesis protein PurH of Parasynechococcus marenigrum (strain WH8102).